Here is a 660-residue protein sequence, read N- to C-terminus: Phosphatidylinositol-3-phosphate phosphatase MTMR7 (660 aa).

The Myotubularin phosphatase domain maps to 126-504 (GWVLIDLSEE…FMYKFWSGMY (379 aa)). A 1,2-diacyl-sn-glycero-3-phospho-(1D-myo-inositol-3-phosphate) is bound by residues Asn250, Asn275, and Ile276. Cys338 (phosphocysteine intermediate) is an active-site residue. The a 1,2-diacyl-sn-glycero-3-phospho-(1D-myo-inositol-3-phosphate) site is built by Ser339, Asp340, Gly341, Trp342, Asp343, Arg344, and Arg384. Positions 514 to 558 (RQSVTDYLMAVKEETQQLEEELEALEERLEKIQKVQLNCTKVKSK) form a coiled coil. The tract at residues 554–660 (KVKSKQSEPS…DSDEAVFLTA (107 aa)) is disordered. The segment covering 566-596 (SGFSTSDNSIANTPQDYSGNMKSFPSRSPSQ) has biased composition (polar residues). At Thr578 the chain carries Phosphothreonine. The span at 641–653 (APSEDSGKDRDSD) shows a compositional bias: basic and acidic residues.

The protein belongs to the protein-tyrosine phosphatase family. Non-receptor class myotubularin subfamily. Heterodimer (via C-terminus) with MTMR9 (via coiled coil domain); the interaction enhances MTMR7 catalytic activity. Does not homodimerize. Interacts with RAB1B (in GDP-bound form).

It is found in the cytoplasm. Its subcellular location is the endomembrane system. The enzyme catalyses a 1,2-diacyl-sn-glycero-3-phospho-(1D-myo-inositol-3-phosphate) + H2O = a 1,2-diacyl-sn-glycero-3-phospho-(1D-myo-inositol) + phosphate. It catalyses the reaction 1D-myo-inositol 1,3-bisphosphate + H2O = 1D-myo-inositol 1-phosphate + phosphate. With respect to regulation, interaction with MTMR9 increases phosphatase activity. Functionally, lipid phosphatase that specifically dephosphorylates the D-3 position of phosphatidylinositol 3-phosphate (PtdIns(3)P) and inositol 1,3-bisphosphate (Ins(1,3)P2). In Pongo abelii (Sumatran orangutan), this protein is Phosphatidylinositol-3-phosphate phosphatase MTMR7.